The chain runs to 117 residues: Serine rich endogenous peptide 5 (117 aa).

A signal peptide spans 1–31 (MATKTSNFVSLRVSLFILLLFISSQVAIADA). Positions 41–55 (LQIVRRSRSQRGRQY) match the SCOOP motif motif. Positions 42–51 (QIVRRSRSQR) are enriched in basic residues. The disordered stretch occupies residues 42 to 117 (QIVRRSRSQR…LPYASSPTST (76 aa)). The SxS motif essential for MIK2 binding signature appears at 47–49 (SRS). Over residues 60 to 84 (LRVPPPPPPPLPQMPSAATPPPMPQ) the composition is skewed to pro residues.

As to quaternary structure, interacts with MIK2 (via extracellular leucine-rich repeat domain); this interaction triggers the formation of complex between MIK2 and the BAK1/SERK3 and SERK4 coreceptors, and subsequent BAK1 activation by phosphorylation.

The protein localises to the cell membrane. The protein resides in the secreted. It localises to the extracellular space. Its subcellular location is the apoplast. Brassicaceae-specific phytocytokine (plant endogenous peptide released into the apoplast) perceived by MIK2 in a BAK1/SERK3 and SERK4 coreceptors-dependent manner, that modulates various physiological and antimicrobial processes including growth prevention and reactive oxygen species (ROS) response regulation. The sequence is that of Serine rich endogenous peptide 5 from Arabidopsis thaliana (Mouse-ear cress).